A 311-amino-acid chain; its full sequence is Aspartate carbamoyltransferase catalytic subunit (311 aa).

2 residues coordinate carbamoyl phosphate: Arg-55 and Thr-56. An L-aspartate-binding site is contributed by Lys-85. Carbamoyl phosphate-binding residues include Arg-106, His-135, and Gln-138. L-aspartate-binding residues include Arg-168 and Arg-230. Residues Leu-268 and Pro-269 each coordinate carbamoyl phosphate.

Belongs to the aspartate/ornithine carbamoyltransferase superfamily. ATCase family. As to quaternary structure, heterododecamer (2C3:3R2) of six catalytic PyrB chains organized as two trimers (C3), and six regulatory PyrI chains organized as three dimers (R2).

The catalysed reaction is carbamoyl phosphate + L-aspartate = N-carbamoyl-L-aspartate + phosphate + H(+). It functions in the pathway pyrimidine metabolism; UMP biosynthesis via de novo pathway; (S)-dihydroorotate from bicarbonate: step 2/3. In terms of biological role, catalyzes the condensation of carbamoyl phosphate and aspartate to form carbamoyl aspartate and inorganic phosphate, the committed step in the de novo pyrimidine nucleotide biosynthesis pathway. The chain is Aspartate carbamoyltransferase catalytic subunit from Salmonella arizonae (strain ATCC BAA-731 / CDC346-86 / RSK2980).